Reading from the N-terminus, the 186-residue chain is Elongation factor P (186 aa).

The protein belongs to the elongation factor P family.

It is found in the cytoplasm. It functions in the pathway protein biosynthesis; polypeptide chain elongation. In terms of biological role, involved in peptide bond synthesis. Stimulates efficient translation and peptide-bond synthesis on native or reconstituted 70S ribosomes in vitro. Probably functions indirectly by altering the affinity of the ribosome for aminoacyl-tRNA, thus increasing their reactivity as acceptors for peptidyl transferase. The polypeptide is Elongation factor P (Enterococcus faecalis (strain ATCC 700802 / V583)).